The following is an 805-amino-acid chain: Leucine--tRNA ligase (805 aa).

Positions 40–51 match the 'HIGH' region motif; that stretch reads PYPSGAGLHVGH. The 'KMSKS' region motif lies at 576 to 580; that stretch reads KMSKS. Position 579 (lysine 579) interacts with ATP.

It belongs to the class-I aminoacyl-tRNA synthetase family.

Its subcellular location is the cytoplasm. The enzyme catalyses tRNA(Leu) + L-leucine + ATP = L-leucyl-tRNA(Leu) + AMP + diphosphate. This is Leucine--tRNA ligase from Brevibacillus brevis (strain 47 / JCM 6285 / NBRC 100599).